We begin with the raw amino-acid sequence, 693 residues long: MARQYPLEKFRNFGIMAHIDAGKTTTSERILFHSGKTHKIGETHDGASVMDWMAQEKERGITITSAATSVTWKDCQLNLIDTPGHVDFTVEVERSLRVLDGAVAVLDAQMGVEPQTETVWRQASRYEVPRIVFVNKMDKTGANFQRSVDSIHSRLGVKSVPIQLPIGAENDFVGIIDLVEMKAYFFDGGENENYETKEIPAEYLEEAKKAHNHMLDEIVTFDEAVMEKYLDGQEISKAEIKSCIRKGVVSSTLFPVLCGTAFKNKGVKPLLDAVVDYLPSPIDVPPAKGYKVGEEVQIPTSDDAPFVGLAFKVATDPFVGRLTFVRVYSGILTSGSYVINTTKDKKERVSRIVKMHAQQRDEINEIRAGDICAIVGLKDTTTGDTIASENQNLTLESMTFAQPVISLAVEPKTKADQEKMGISLSKLAEEDPTFRTYTDEETGQTIIAGMGELHLDILVDRLRREFKVDVNVGAPQVSYRETLKAKADVEGKYIKQSGGRGQYGHVVITFEPNHDKGFEFEDKIVGGKIPKEYIKSVKAGLEAAMNNGPLAGYPMIDIKASLFDGSYHDVDSNEMAYKIAASMALKEAGKRCKPALLEPIMAIEVTVPEQYFGDTMGDISSRRGMIEGTESRDNVQVIKAKVPLSEMFGYATDLRSFTQGRGNYIMQFSHYAEAPKSVVEKVIEDKAKKNKTA.

Positions 8–282 constitute a tr-type G domain; that stretch reads EKFRNFGIMA…AVVDYLPSPI (275 aa). GTP contacts are provided by residues 17 to 24, 81 to 85, and 135 to 138; these read AHIDAGKT, DTPGH, and NKMD.

This sequence belongs to the TRAFAC class translation factor GTPase superfamily. Classic translation factor GTPase family. EF-G/EF-2 subfamily.

The protein localises to the cytoplasm. Its function is as follows. Catalyzes the GTP-dependent ribosomal translocation step during translation elongation. During this step, the ribosome changes from the pre-translocational (PRE) to the post-translocational (POST) state as the newly formed A-site-bound peptidyl-tRNA and P-site-bound deacylated tRNA move to the P and E sites, respectively. Catalyzes the coordinated movement of the two tRNA molecules, the mRNA and conformational changes in the ribosome. This chain is Elongation factor G, found in Mycoplasmoides gallisepticum (strain R(low / passage 15 / clone 2)) (Mycoplasma gallisepticum).